An 84-amino-acid chain; its full sequence is Putative defensin-like protein 139 (84 aa).

Residues 1–28 (MEPSNQIFFYLRRSKLLSGLGEIRMAKG) form the signal peptide. 4 disulfides stabilise this stretch: C37/C81, C46/C65, C51/C75, and C55/C77.

It belongs to the DEFL family.

The protein resides in the secreted. In Arabidopsis thaliana (Mouse-ear cress), this protein is Putative defensin-like protein 139 (LCR7).